The sequence spans 124 residues: Putative calmodulin-3 (124 aa).

4 EF-hand domains span residues 1-18 (GCIT…LGQN), 19-54 (PTEA…KIKD), 56-91 (DFEE…LGEK), and 92-124 (LTDE…MMAK). 11 residues coordinate Ca(2+): C2, E7, D32, D34, N36, T38, E43, D69, D71, N73, and E80. K91 is subject to N6,N6,N6-trimethyllysine. Residues D105, D107, D109, Q111, and E116 each contribute to the Ca(2+) site.

This sequence belongs to the calmodulin family. In terms of tissue distribution, not detected in the organs tested.

Functionally, calmodulin mediates the control of a large number of enzymes, ion channels and other proteins by Ca(2+). Among the enzymes to be stimulated by the calmodulin-Ca(2+) complex are a number of protein kinases and phosphatases. In Solanum tuberosum (Potato), this protein is Putative calmodulin-3 (PCM3).